The chain runs to 423 residues: CinA-like protein (423 aa).

This sequence belongs to the CinA family.

The chain is CinA-like protein from Chlorobaculum tepidum (strain ATCC 49652 / DSM 12025 / NBRC 103806 / TLS) (Chlorobium tepidum).